We begin with the raw amino-acid sequence, 313 residues long: 3-O-acetylpapaveroxine carboxylesterase CXE2 (313 aa).

The Involved in the stabilization of the negatively charged intermediate by the formation of the oxyanion hole signature appears at 72–74; sequence HGG. Active-site residues include S158, D262, and H292.

Belongs to the 'GDXG' lipolytic enzyme family.

The enzyme catalyses 3-O-acetylpapaveroxine + H2O = narcotine hemiacetal + acetate + H(+). The protein operates within alkaloid biosynthesis. Functionally, carboxylesterase involved in the biosynthesis of the benzylisoquinoline alkaloid noscapine. Converts 3-O-acetylpapaveroxine to narcotine hemiacetal. The sequence is that of 3-O-acetylpapaveroxine carboxylesterase CXE2 from Papaver somniferum (Opium poppy).